A 250-amino-acid polypeptide reads, in one-letter code: ATP synthase subunit a (250 aa).

The next 6 membrane-spanning stretches (helical) occupy residues 25 to 45, 84 to 104, 115 to 135, 141 to 161, 187 to 209, and 223 to 243; these read VSFTNSAAFMVGIVALIFFFL, VFFPLVFSLFVFVFVANVIGL, IVVTAALALLVIGTVVIYGFY, FLHLFVPSGVPAFLLPFIVLI, ALKVFAFFVVGLGSAGFLGWLGA, and ELLVAILQAYVFAVLTSIYLN.

It belongs to the ATPase A chain family. In terms of assembly, F-type ATPases have 2 components, CF(1) - the catalytic core - and CF(0) - the membrane proton channel. CF(1) has five subunits: alpha(3), beta(3), gamma(1), delta(1), epsilon(1). CF(0) has three main subunits: a(1), b(2) and c(9-12). The alpha and beta chains form an alternating ring which encloses part of the gamma chain. CF(1) is attached to CF(0) by a central stalk formed by the gamma and epsilon chains, while a peripheral stalk is formed by the delta and b chains.

The protein resides in the cell inner membrane. In terms of biological role, key component of the proton channel; it plays a direct role in the translocation of protons across the membrane. This Azorhizobium caulinodans (strain ATCC 43989 / DSM 5975 / JCM 20966 / LMG 6465 / NBRC 14845 / NCIMB 13405 / ORS 571) protein is ATP synthase subunit a.